A 215-amino-acid chain; its full sequence is 3-isopropylmalate dehydratase small subunit (215 aa).

The protein belongs to the LeuD family. LeuD type 1 subfamily. Heterodimer of LeuC and LeuD.

It carries out the reaction (2R,3S)-3-isopropylmalate = (2S)-2-isopropylmalate. It participates in amino-acid biosynthesis; L-leucine biosynthesis; L-leucine from 3-methyl-2-oxobutanoate: step 2/4. Catalyzes the isomerization between 2-isopropylmalate and 3-isopropylmalate, via the formation of 2-isopropylmaleate. The chain is 3-isopropylmalate dehydratase small subunit from Teredinibacter turnerae (strain ATCC 39867 / T7901).